The primary structure comprises 101 residues: UPF0473 protein EF_1204 (101 aa).

The protein belongs to the UPF0473 family.

This chain is UPF0473 protein EF_1204, found in Enterococcus faecalis (strain ATCC 700802 / V583).